The following is a 329-amino-acid chain: Phosphatidylcholine:ceramide cholinephosphotransferase 3 (329 aa).

Residues 1-26 (MAVPPVEMYSGSFWNRMRKPLPLRTQ) are Cytoplasmic-facing. A helical membrane pass occupies residues 27–47 (VIRFTVVFVIVSFILAVALQI). Over 48–74 (THERMPDPKVTKPLPDLGFELLTKVPG) the chain is Extracellular. The helical transmembrane segment at 75-95 (MYVLADCCIGFLNILSVFTAF) threads the bilayer. Over 96–147 (KLYLLHRHCVGSGEPELPCNIPGVSRFFLSVWLCKENCRIELRNIHTIAWIR) the chain is Cytoplasmic. A helical membrane pass occupies residues 148 to 168 (FITSYALLLLFRSAVIVMTSL). The Extracellular segment spans residues 169-211 (PAPDDLCQNPPKIENPVKNVILTVLTAGAGSIHCGDLMYSGHT). A helical transmembrane segment spans residues 212-232 (VILTLHLMFHWIYGAMVHWSF). Position 233 (Arg-233) is a topological domain, cytoplasmic. The chain crosses the membrane as a helical span at residues 234–254 (PVVTVVAIFGYYCIVASRFHY). The Extracellular portion of the chain corresponds to 255-257 (TDD). Residues 258–278 (VLVAIYLTIATFIAVGHNADG) traverse the membrane as a helical segment. Residues 279–329 (APWQLQLFIRWWPCCGANSREVTEDSQPVMVAFKSEAAGQSSRKVVDERNH) lie on the Cytoplasmic side of the membrane.

It belongs to the sphingomyelin synthase family.

The protein resides in the membrane. The catalysed reaction is an N-acylsphing-4-enine + a 1,2-diacyl-sn-glycero-3-phosphocholine = a sphingomyelin + a 1,2-diacyl-sn-glycerol. It carries out the reaction an N-acylsphinganine + a 1,2-diacyl-sn-glycero-3-phosphocholine = an N-acylsphinganine-1-phosphocholine + a 1,2-diacyl-sn-glycerol. The enzyme catalyses an N-acylsphing-4-enine + a 1,2-diacyl-sn-glycero-3-phosphoethanolamine = an N-acylsphing-4-enine 1-phosphoethanolamine + a 1,2-diacyl-sn-glycerol. It catalyses the reaction an N-acylsphinganine + a 1,2-diacyl-sn-glycero-3-phosphoethanolamine = an N-acylsphinganine-1-phosphoethanolamine + a 1,2-diacyl-sn-glycerol. Bifunctional sphingomyelin (SM)/ethanolamine phosphorylceramide (EPC) synthase with minimal inositol phosphorylceramide (IPC) synthase activity. Specificity is likely to be defined by residues in the lumenal catalytic domain that interact with the polar head groups of the phospholipid donors. SM is synthesized by both stages of the parasite life cycle, bloodstream forms (BSF) and procyclic forms (PCF), by transferring the phosphocholine from a 1,2-diacyl-sn-glycero-3-phosphocholine to an N-acylsphing-4-enine (ceramide) or an N-acylsphinganine (dihydroceramide). Similarly, EPC is synthesized by transferring phosphoethanolamine from a 1,2-diacyl-sn-glycero-3-phosphoethanolamine to ceramide or dihydroceramide by BSF and PCF, while IPC is confined to PCF. The ceramide/dihydroceramide ratios are skewed towards dihydroceramide in PCF parasites and ceramide in BSF parasites, this is likely due to differential expression and/or regulation of dihydroceramide desaturase, the enzyme responsible for converting dihydroceramide to ceramide. This is Phosphatidylcholine:ceramide cholinephosphotransferase 3 from Trypanosoma brucei brucei.